Reading from the N-terminus, the 516-residue chain is MGRKKIQITRIMDERNRQVTFTKRKFGLMKKAYELSVLCDCEIALIIFNSSNKLFQYASTDMDKVLLKYTEYNEPHESRTNSDIVETLRKKGLNGCESPDDQRYFEEETFSKLIEDSDFVFKRDPALNKKENRGCDSPDPDGSYVLTPHTEEKYKKINEEFDNMMRSHKISPGLPQQTFPMSVTVPVSNPNTLPYSSPGNTMVTASLAASASLTDARMLSPPPTTLHRNVVSPGLPQRPPSTGNAGVMLCSSDLSVPNGAGTSPVGNGFVNPRASPSHLGPTGGNVLGKVMPTKSPPPPGGNLVMNSRKPDLRVVIPPSSKGMMPPLNTQRVTSSQGTQPLATPIVSVATPSLAPQGLIYSAMPTAYNTDYPLTSADLSMLQGFNSPGILPLGQVSAWQQHHVGQAALSSFVATGQLSQGSNLSINTNQNINIKSEPISPPRDRITPSGFQSHQHHQHQPRPEMDSLSSSSSSYDGSDREDVRNDFHSPIGLGRPANNEDRDSPSVKRMRMDAWVT.

Residues 1–100 (MGRKKIQITR…KGLNGCESPD (100 aa)) are interaction with hdac9. Residues 3 to 57 (RKKIQITRIMDERNRQVTFTKRKFGLMKKAYELSVLCDCEIALIIFNSSNKLFQY) form the MADS-box domain. The segment at residues 58-86 (ASTDMDKVLLKYTEYNEPHESRTNSDIVE) is a DNA-binding region (mef2-type). The disordered stretch occupies residues 318–339 (PSSKGMMPPLNTQRVTSSQGTQ). A compositionally biased stretch (polar residues) spans 327–339 (LNTQRVTSSQGTQ). Position 343 is a phosphothreonine; by NLK (T343). S386 bears the Phosphoserine; by NLK mark. Positions 420–433 (GSNLSINTNQNINI) are enriched in polar residues. The interval 420-516 (GSNLSINTNQ…KRMRMDAWVT (97 aa)) is disordered. A compositionally biased stretch (low complexity) spans 465-475 (DSLSSSSSSYD). Composition is skewed to basic and acidic residues over residues 476–486 (GSDREDVRNDF) and 497–516 (NNED…AWVT).

This sequence belongs to the MEF2 family. Interacts with hdac9 and nlk2. In terms of tissue distribution, restricted to the somitic mesoderm of early embryos. Expressed in the head region of neurula stage embryos and in body muscle (myotomes) of the tadpole. Expressed in all tissues examined in the adult.

The protein resides in the nucleus. In terms of biological role, may regulate muscle-specific transcription in the embryo and may regulate transcription of a variety of cell types in the adult. Binds to the sequence 5'-CTA[TA]4TAR-3'. Acts downstream of nlk2 in anterior neural development, including eye formation. In Xenopus laevis (African clawed frog), this protein is Myocyte-specific enhancer factor 2A homolog (mef2a).